The chain runs to 337 residues: Ketol-acid reductoisomerase (NAD(P)(+)) (337 aa).

In terms of domain architecture, KARI N-terminal Rossmann spans 2–187 (ARMFYDADAN…GCTRAGVIET (186 aa)). NADP(+) contacts are provided by residues 25 to 28 (FGSQ), Arg48, and 88 to 91 (DEVQ). The active site involves His113. Residue Gly139 participates in NADP(+) binding. Residues 188–333 (SFQEETETDL…AELRGMMPWL (146 aa)) enclose the KARI C-terminal knotted domain. 4 residues coordinate Mg(2+): Asp196, Glu200, Glu232, and Glu236. Ser257 provides a ligand contact to substrate.

This sequence belongs to the ketol-acid reductoisomerase family. The cofactor is Mg(2+).

It carries out the reaction (2R)-2,3-dihydroxy-3-methylbutanoate + NAD(+) = (2S)-2-acetolactate + NADH + H(+). The enzyme catalyses (2R)-2,3-dihydroxy-3-methylbutanoate + NADP(+) = (2S)-2-acetolactate + NADPH + H(+). It functions in the pathway amino-acid biosynthesis; L-isoleucine biosynthesis; L-isoleucine from 2-oxobutanoate: step 2/4. It participates in amino-acid biosynthesis; L-valine biosynthesis; L-valine from pyruvate: step 2/4. Its function is as follows. Involved in the biosynthesis of branched-chain amino acids (BCAA). Catalyzes an alkyl-migration followed by a ketol-acid reduction of (S)-2-acetolactate (S2AL) to yield (R)-2,3-dihydroxy-isovalerate. In the isomerase reaction, S2AL is rearranged via a Mg-dependent methyl migration to produce 3-hydroxy-3-methyl-2-ketobutyrate (HMKB). In the reductase reaction, this 2-ketoacid undergoes a metal-dependent reduction by NADPH or NADH to yield (R)-2,3-dihydroxy-isovalerate. This Syntrophomonas wolfei subsp. wolfei (strain DSM 2245B / Goettingen) protein is Ketol-acid reductoisomerase (NAD(P)(+)).